Reading from the N-terminus, the 103-residue chain is Large ribosomal subunit protein bL36m (103 aa).

It belongs to the bacterial ribosomal protein bL36 family. As to quaternary structure, component of the mitochondrial large ribosomal subunit (mt-LSU). Mature mammalian 55S mitochondrial ribosomes consist of a small (28S) and a large (39S) subunit. The 28S small subunit contains a 12S ribosomal RNA (12S mt-rRNA) and 30 different proteins. The 39S large subunit contains a 16S rRNA (16S mt-rRNA), a copy of mitochondrial valine transfer RNA (mt-tRNA(Val)), which plays an integral structural role, and 52 different proteins. bL36m has a zinc binding site.

The protein localises to the mitochondrion. The polypeptide is Large ribosomal subunit protein bL36m (MRPL36) (Homo sapiens (Human)).